The chain runs to 319 residues: Cobalamin biosynthesis protein CobD (319 aa).

4 consecutive transmembrane segments (helical) span residues 56–76 (GLWI…LWLM), 153–173 (VDGV…LAMA), 204–224 (LANW…AWFI), and 290–310 (IPLS…LFAL).

Belongs to the CobD/CbiB family.

The protein resides in the cell membrane. The protein operates within cofactor biosynthesis; adenosylcobalamin biosynthesis. Its function is as follows. Converts cobyric acid to cobinamide by the addition of aminopropanol on the F carboxylic group. The protein is Cobalamin biosynthesis protein CobD of Photorhabdus laumondii subsp. laumondii (strain DSM 15139 / CIP 105565 / TT01) (Photorhabdus luminescens subsp. laumondii).